Reading from the N-terminus, the 247-residue chain is ATP synthase subunit a (247 aa).

6 consecutive transmembrane segments (helical) span residues 26–46 (ITNN…LFYV), 85–105 (YFPL…IGLL), 115–135 (IIFT…INFF), 141–161 (FFNL…LVVI), 178–198 (FANM…IFNV), and 205–225 (ISFL…CIAI).

It belongs to the ATPase A chain family. F-type ATPases have 2 components, CF(1) - the catalytic core - and CF(0) - the membrane proton channel. CF(1) has five subunits: alpha(3), beta(3), gamma(1), delta(1), epsilon(1). CF(0) has three main subunits: a, b and c.

It localises to the mitochondrion inner membrane. Functionally, mitochondrial membrane ATP synthase (F(1)F(0) ATP synthase or Complex V) produces ATP from ADP in the presence of a proton gradient across the membrane which is generated by electron transport complexes of the respiratory chain. F-type ATPases consist of two structural domains, F(1) - containing the extramembraneous catalytic core and F(0) - containing the membrane proton channel, linked together by a central stalk and a peripheral stalk. During catalysis, ATP synthesis in the catalytic domain of F(1) is coupled via a rotary mechanism of the central stalk subunits to proton translocation. Key component of the proton channel; it may play a direct role in the translocation of protons across the membrane. In Acanthamoeba castellanii (Amoeba), this protein is ATP synthase subunit a (ATP6).